The chain runs to 777 residues: Isoamylase (777 aa).

Residues 1 to 32 (MDPHAPQRQRSGQRLRALALAALACALSPAHA) form the signal peptide. Residues D162, E263, T264, N266, and D293 each coordinate Ca(2+). The active-site Nucleophile is the D410. Residues C419 and C423 are joined by a disulfide bond. E458 serves as the catalytic Proton donor.

It belongs to the glycosyl hydrolase 13 family. In terms of assembly, monomer. The cofactor is Ca(2+).

The enzyme catalyses Hydrolysis of (1-&gt;6)-alpha-D-glucosidic branch linkages in glycogen, amylopectin and their beta-limit dextrins.. Its function is as follows. Has a high rate of hydrolysis for glycogen. Does not cleave pullulan. This chain is Isoamylase (iam), found in Flavobacterium sp.